Reading from the N-terminus, the 551-residue chain is Interleukin-2 receptor subunit beta (551 aa).

The N-terminal stretch at 1–26 (MAAPALSWRLPLLILLLPLATPWASA) is a signal peptide. Residues 27–240 (TVNGTSQFTC…TKPASLGKDT (214 aa)) are Extracellular-facing. N29, N43, and N71 each carry an N-linked (GlcNAc...) asparagine glycan. C36 and C46 are oxidised to a cystine. Residues C74 and C86 are joined by a disulfide bond. One can recognise a Fibronectin type-III domain in the interval 134–234 (APISLQVVHV…QPLAFRTKPA (101 aa)). Residue N149 is glycosylated (N-linked (GlcNAc...) asparagine). The short motif at 220–224 (WSPWS) is the WSXWS motif element. Residues 241–265 (IPWLGHLLVGLSGAFGFIILVYLLI) traverse the membrane as a helical segment. The Cytoplasmic portion of the chain corresponds to 266 to 551 (NCRNTGPWLK…LQGQDPTHLV (286 aa)). The short motif at 278–286 (LKCHTPDPS) is the Box 1 motif element. Disordered regions lie at residues 393-412 (DEGVAGAPTGSSPQPLQPLS) and 433-476 (SLLG…GPPT).

The protein belongs to the type I cytokine receptor family. Type 4 subfamily. In terms of assembly, non-covalent dimer of an alpha and a beta subunit. IL2R exists in 3 different forms: a high affinity dimer, an intermediate affinity monomer (beta subunit), and a low affinity monomer (alpha subunit). The high and intermediate affinity forms also associate with a gamma subunit. Interacts with SHB upon interleukin stimulation.

The protein resides in the cell membrane. It is found in the cell surface. Receptor for interleukin-2. This beta subunit is involved in receptor mediated endocytosis and transduces the mitogenic signals of IL2. Probably in association with IL15RA, involved in the stimulation of neutrophil phagocytosis by IL15. The sequence is that of Interleukin-2 receptor subunit beta (IL2RB) from Pan troglodytes (Chimpanzee).